The chain runs to 110 residues: Ribonuclease P protein component 4 (110 aa).

Zn(2+) is bound by residues cysteine 65, cysteine 68, cysteine 94, and cysteine 97.

Belongs to the eukaryotic/archaeal RNase P protein component 4 family. In terms of assembly, consists of a catalytic RNA component and at least 4-5 protein subunits. Zn(2+) serves as cofactor.

The protein localises to the cytoplasm. The catalysed reaction is Endonucleolytic cleavage of RNA, removing 5'-extranucleotides from tRNA precursor.. Its function is as follows. Part of ribonuclease P, a protein complex that generates mature tRNA molecules by cleaving their 5'-ends. The polypeptide is Ribonuclease P protein component 4 (Methanococcus maripaludis (strain C7 / ATCC BAA-1331)).